Reading from the N-terminus, the 267-residue chain is Putative [LysW]-aminoadipate/[LysW]-glutamate kinase (267 aa).

Substrate contacts are provided by residues 37 to 38 (GG), Arg64, and Asn169.

This sequence belongs to the acetylglutamate kinase family. LysZ subfamily.

The protein resides in the cytoplasm. The enzyme catalyses [amino-group carrier protein]-C-terminal-N-(1,4-dicarboxybutan-1-yl)-L-glutamine + ATP = [amino-group carrier protein]-C-terminal-N-(1-carboxy-5-phosphooxy-5-oxopentan-1-yl)-L-glutamine + ADP. It catalyses the reaction [amino-group carrier protein]-C-terminal-gamma-(L-glutamyl)-L-glutamate + ATP = [amino-group carrier protein]-C-terminal-gamma-(5-phospho-L-glutamyl)-L-glutamate + ADP. The protein operates within amino-acid biosynthesis; L-lysine biosynthesis via AAA pathway; L-lysine from L-alpha-aminoadipate (Thermus route): step 2/5. It participates in amino-acid biosynthesis; L-arginine biosynthesis. Involved in both the arginine and lysine biosynthetic pathways. Phosphorylates the LysW-bound precursors glutamate (for arginine biosynthesis), respectively alpha-aminoadipate (for lysine biosynthesis). The chain is Putative [LysW]-aminoadipate/[LysW]-glutamate kinase from Nitrosopumilus maritimus (strain SCM1).